The primary structure comprises 1388 residues: Dicer-like protein 2 (1388 aa).

In terms of domain architecture, Helicase ATP-binding spans 23–203 (MLEASMKENI…LLTVESNLDA (181 aa)). 36–43 (MDTGSGKT) serves as a coordination point for ATP. Residues 144 to 147 (DEAH) carry the DEAH box motif. Residues 371–537 (SLLNFLDSLD…DDERQLQSVS (167 aa)) form the Helicase C-terminal domain. In terms of domain architecture, Dicer dsRNA-binding fold spans 564 to 658 (AMAHLHHFCA…LPLTKRPELK (95 aa)). 2 consecutive RNase III domains span residues 919–1059 (ATRL…MDGG) and 1098–1281 (NERL…VDSG). Mg(2+)-binding residues include Glu1137, Asp1267, and Glu1270.

It belongs to the helicase family. Dicer subfamily. The cofactor is Mg(2+). Requires Mn(2+) as cofactor.

Functionally, dicer-like endonuclease involved in cleaving double-stranded RNA in the RNA interference (RNAi) pathway. Produces 21 to 25 bp dsRNAs (siRNAs) which target the selective destruction of homologous RNAs leading to sequence-specific suppression of gene expression, called post-transcriptional gene silencing (PTGS). Part of a broad host defense response against viral infection and transposons. This Neosartorya fischeri (strain ATCC 1020 / DSM 3700 / CBS 544.65 / FGSC A1164 / JCM 1740 / NRRL 181 / WB 181) (Aspergillus fischerianus) protein is Dicer-like protein 2 (dcl2).